The chain runs to 352 residues: DNA-directed RNA polymerase subunit alpha (352 aa).

The alpha N-terminal domain (alpha-NTD) stretch occupies residues 1–226 (MLISQRPTLT…ELFGLARELN (226 aa)). Residues 243-352 (HIASFGLPIE…EQDYAETEQL (110 aa)) are alpha C-terminal domain (alpha-CTD). Residues 324-352 (DASTGTWSDSGTFSDNDGGEQDYAETEQL) are disordered. A compositionally biased stretch (polar residues) spans 326 to 338 (STGTWSDSGTFSD). Residues 340–352 (DGGEQDYAETEQL) show a composition bias toward acidic residues.

The protein belongs to the RNA polymerase alpha chain family. Homodimer. The RNAP catalytic core consists of 2 alpha, 1 beta, 1 beta' and 1 omega subunit. When a sigma factor is associated with the core the holoenzyme is formed, which can initiate transcription.

The enzyme catalyses RNA(n) + a ribonucleoside 5'-triphosphate = RNA(n+1) + diphosphate. Functionally, DNA-dependent RNA polymerase catalyzes the transcription of DNA into RNA using the four ribonucleoside triphosphates as substrates. The polypeptide is DNA-directed RNA polymerase subunit alpha (Nocardia farcinica (strain IFM 10152)).